The chain runs to 151 residues: MSTMPPASSGWIRKMQLGQQYMKTWPIEKQLAPMFPENRIIKATRFGIRFMPPLAIFTLTWQIALGGQLGPAVATALFACSLPMQGLWWLGKRASTPLPATLLKWFHEIRDKFAEAGIAMAPVRQTPTYQSLAELLKLAFKQLDRSFLDDI.

2 helical membrane passes run Phe46–Leu65 and Leu69–Gly91.

The protein belongs to the UPF0208 family.

The protein resides in the cell inner membrane. In Photorhabdus temperata, this protein is UPF0208 membrane protein YfbV (yfbV).